The chain runs to 148 residues: Nucleoside diphosphate kinase (148 aa).

Residues lysine 10, phenylalanine 58, arginine 86, threonine 92, arginine 103, and asparagine 113 each contribute to the ATP site. Histidine 116 functions as the Pros-phosphohistidine intermediate in the catalytic mechanism.

It belongs to the NDK family. Requires Mg(2+) as cofactor.

It localises to the cytoplasm. The enzyme catalyses a 2'-deoxyribonucleoside 5'-diphosphate + ATP = a 2'-deoxyribonucleoside 5'-triphosphate + ADP. The catalysed reaction is a ribonucleoside 5'-diphosphate + ATP = a ribonucleoside 5'-triphosphate + ADP. In terms of biological role, major role in the synthesis of nucleoside triphosphates other than ATP. The ATP gamma phosphate is transferred to the NDP beta phosphate via a ping-pong mechanism, using a phosphorylated active-site intermediate. This Thermoplasma acidophilum (strain ATCC 25905 / DSM 1728 / JCM 9062 / NBRC 15155 / AMRC-C165) protein is Nucleoside diphosphate kinase.